Reading from the N-terminus, the 206-residue chain is Type III pantothenate kinase (206 aa).

5–12 (DIGNTFLH) lines the ATP pocket. Substrate contacts are provided by residues Tyr-69 and 73-76 (GVDR). The active-site Proton acceptor is Asp-75. Position 90 (Asp-90) interacts with K(+). Ser-93 is a binding site for ATP. Thr-145 lines the substrate pocket.

Belongs to the type III pantothenate kinase family. Homodimer. NH4(+) is required as a cofactor. It depends on K(+) as a cofactor.

The protein localises to the cytoplasm. It carries out the reaction (R)-pantothenate + ATP = (R)-4'-phosphopantothenate + ADP + H(+). It functions in the pathway cofactor biosynthesis; coenzyme A biosynthesis; CoA from (R)-pantothenate: step 1/5. Functionally, catalyzes the phosphorylation of pantothenate (Pan), the first step in CoA biosynthesis. The chain is Type III pantothenate kinase from Helicobacter hepaticus (strain ATCC 51449 / 3B1).